The chain runs to 559 residues: DnaJ homolog subfamily C member 11 (559 aa).

A2 carries the N-acetylalanine modification. The J domain maps to 14-82; it reads DYYSLLNVRR…QTRAIYDIYG (69 aa). Phosphoserine is present on S204. Residues 415–457 adopt a coiled-coil conformation; it reads QKEKELEKQRENTASDILQKKQEAEAAVRLMQESVRRIIEAEE.

It belongs to the DNAJC11 family. As to quaternary structure, associates with the mitochondrial contact site and cristae organizing system (MICOS) complex, composed of at least MICOS10/MIC10, CHCHD3/MIC19, CHCHD6/MIC25, APOOL/MIC27, IMMT/MIC60, APOO/MIC23/MIC26 and QIL1/MIC13. This complex was also known under the names MINOS or MitOS complex. The MICOS complex associates with mitochondrial outer membrane proteins SAMM50, MTX1 and MTX2 (together described as components of the mitochondrial outer membrane sorting assembly machinery (SAM) complex) and DNAJC11, mitochondrial inner membrane protein TMEM11 and with HSPA9. The MICOS and SAM complexes together with DNAJC11 are part of a large protein complex spanning both membranes termed the mitochondrial intermembrane space bridging (MIB) complex.

The protein localises to the mitochondrion. It localises to the mitochondrion outer membrane. Required for mitochondrial inner membrane organization. Seems to function through its association with the MICOS complex and the mitochondrial outer membrane sorting assembly machinery (SAM) complex. The chain is DnaJ homolog subfamily C member 11 (Dnajc11) from Mus musculus (Mouse).